Here is a 100-residue protein sequence, read N- to C-terminus: UPF0235 protein Cvib_0403 (100 aa).

This sequence belongs to the UPF0235 family.

The protein is UPF0235 protein Cvib_0403 of Chlorobium phaeovibrioides (strain DSM 265 / 1930) (Prosthecochloris vibrioformis (strain DSM 265)).